We begin with the raw amino-acid sequence, 741 residues long: Nuclear pore complex protein Nup88 (741 aa).

Residue Ala-2 is modified to N-acetylalanine. Residues Ser-35, Ser-50, Ser-379, Ser-437, Ser-442, and Ser-517 each carry the phosphoserine modification. Thr-525 bears the Phosphothreonine mark. The residue at position 540 (Ser-540) is a Phosphoserine. Positions 585–651 (EEIQRRVKLL…KLLHSFHSEL (67 aa)) form a coiled coil. A Phosphoserine modification is found at Ser-698.

In terms of assembly, interacts with NUP214/CAN. Interacts with NUP62 and NUP98. Ubiquitous.

Its subcellular location is the nucleus. The protein resides in the nuclear pore complex. Component of nuclear pore complex. This Homo sapiens (Human) protein is Nuclear pore complex protein Nup88 (NUP88).